The sequence spans 180 residues: Type IV major pilin protein PilE1 (180 aa).

Residues 1–7 (MNTLQKG) constitute a propeptide that is removed on maturation. F8 carries the post-translational modification N-methylphenylalanine. The helical transmembrane segment at 8–28 (FTLIELMIVIAIVGILAAVAL) threads the bilayer. Residue S70 is glycosylated (O-linked (GlcNAc...) serine). C128 and C160 are joined by a disulfide.

The protein belongs to the N-Me-Phe pilin family. The pili are polar flexible filaments of about 5.4 nanometers diameter and 2.5 micrometers average length; they consist of only a single polypeptide chain arranged in a helical configuration of five subunits per turn in the assembled pilus.

It is found in the fimbrium. The protein localises to the membrane. In terms of biological role, major component of the type IV pilus (T4P) that plays a role in cellular adherence, microcolony formation, resistance to neutrophil mediated killing, twitching motility as well as transformation. Mediates the attachment and the formation of bacterial microcolonies on host epithelial cells. Mechanistically, pili retractation induces host NF-kappa-B activation in infected cells, which is temporally associated with the formation of gonococcal microcolonies. This is Type IV major pilin protein PilE1 (pilE1) from Neisseria gonorrhoeae.